Here is a 268-residue protein sequence, read N- to C-terminus: MQTIAIKDFIDIKYIKQDQISEIIISRPQVLNAFRPRTINEIIAAFYDSREDSSIGVVILSGHGSRAFCVGGDQKIRSKTGYIDEKGRSSLNVLELQRIIRTFPKPVIAKVSGYAVGGGQILNMMCDLTIASENAVLGQSGPKVGSFDAGYGSAYMARIIGQKKARELWFTCYQYDAFEAYKMGLVNWVVKIEDLDSYAIKLATDILNKSPLAIRFLKSSLNADCDGQSGLQELAGYSTMLFYMSAEGQEGHRAFLENREPDFSKFNS.

Substrate contacts are provided by residues 30-31, 70-74, 114-118, S140, and S146; these read VL, VGGDQ, and YAVGG. Hydrogencarbonate is bound at residue 139-141; that stretch reads QSG.

It belongs to the enoyl-CoA hydratase/isomerase family. MenB subfamily. The cofactor is hydrogencarbonate.

It is found in the plastid. Its subcellular location is the chloroplast. The enzyme catalyses 2-succinylbenzoyl-CoA + H(+) = 1,4-dihydroxy-2-naphthoyl-CoA + H2O. It functions in the pathway quinol/quinone metabolism; 1,4-dihydroxy-2-naphthoate biosynthesis; 1,4-dihydroxy-2-naphthoate from chorismate: step 6/7. Its pathway is quinol/quinone metabolism; menaquinone biosynthesis. Its function is as follows. Converts o-succinylbenzoyl-CoA (OSB-CoA) to 1,4-dihydroxy-2-naphthoyl-CoA (DHNA-CoA). This is 1,4-dihydroxy-2-naphthoyl-CoA synthase (menB) from Cyanidium caldarium (Red alga).